Consider the following 480-residue polypeptide: Glutamate--tRNA ligase (480 aa).

Positions 9-19 (PSPTGNLHIGT) match the 'HIGH' region motif. Residues 247–251 (KLSKR) carry the 'KMSKS' region motif. Lys-250 is a binding site for ATP.

Belongs to the class-I aminoacyl-tRNA synthetase family. Glutamate--tRNA ligase type 1 subfamily. As to quaternary structure, monomer.

The protein localises to the cytoplasm. The enzyme catalyses tRNA(Glu) + L-glutamate + ATP = L-glutamyl-tRNA(Glu) + AMP + diphosphate. In terms of biological role, catalyzes the attachment of glutamate to tRNA(Glu) in a two-step reaction: glutamate is first activated by ATP to form Glu-AMP and then transferred to the acceptor end of tRNA(Glu). This chain is Glutamate--tRNA ligase, found in Nostoc sp. (strain PCC 7120 / SAG 25.82 / UTEX 2576).